Consider the following 359-residue polypeptide: HTH-type transcriptional regulator Rv3575c (359 aa).

The HTH lacI-type domain maps to 9–64; sequence ATLASLAAELKVSRTTVSNAFNRPDQLSADLRERVLATAKRLGYAGPDPVARSLRT. The segment at residues 11–30 is a DNA-binding region (H-T-H motif); it reads LASLAAELKVSRTTVSNAFN.

Transcriptional regulator that negatively regulates transcription of the mce4 operon, which is involved in cholesterol transport and utilization. Acts by binding to the promoter region of the mce4 operon. It affects the utilization of host cholesterol as a carbon source, impacting the host's innate immune response. This chain is HTH-type transcriptional regulator Rv3575c, found in Mycobacterium tuberculosis (strain ATCC 25618 / H37Rv).